The sequence spans 284 residues: Ubiquitin thioesterase otubain-like (284 aa).

Residues 77–274 form the OTU domain; the sequence is GEIRYIRGDG…PGHYDVIYKK (198 aa). The active site involves D85. C88 functions as the Nucleophile in the catalytic mechanism. Residue I176 coordinates substrate. Catalysis depends on residues H245 and H267.

The protein belongs to the peptidase C65 family.

The catalysed reaction is Thiol-dependent hydrolysis of ester, thioester, amide, peptide and isopeptide bonds formed by the C-terminal Gly of ubiquitin (a 76-residue protein attached to proteins as an intracellular targeting signal).. Its function is as follows. Hydrolase that can remove conjugated ubiquitin from proteins and plays an important regulatory role at the level of protein turnover by preventing degradation. Specifically cleaves 'Lys-48'-linked polyubiquitin. This is Ubiquitin thioesterase otubain-like (otub-1) from Caenorhabditis elegans.